The chain runs to 84 residues: Translational regulator CsrA (84 aa).

Belongs to the CsrA/RsmA family. Homodimer; the beta-strands of each monomer intercalate to form a hydrophobic core, while the alpha-helices form wings that extend away from the core.

It localises to the cytoplasm. Its function is as follows. A translational regulator that binds mRNA to regulate translation initiation and/or mRNA stability. Usually binds in the 5'-UTR at or near the Shine-Dalgarno sequence preventing ribosome-binding, thus repressing translation. Its main target seems to be the major flagellin gene, while its function is anatagonized by FliW. In Leptospira interrogans serogroup Icterohaemorrhagiae serovar Lai (strain 56601), this protein is Translational regulator CsrA.